The chain runs to 464 residues: Delta(5) fatty acid desaturase A (464 aa).

Residues 13 to 90 (GKQYSWSELA…LKNYEIGYIS (78 aa)) form the Cytochrome b5 heme-binding domain. The heme site is built by His48 and His71. 2 helical membrane passes run 125–145 (AVSIFSRLALVYLLVFVTYYL) and 153–173 (FYLNCFLAIVYALCNSLFSMH). A Histidine box-1 motif is present at residues 176–180 (HDSCH). A Histidine box-2 motif is present at residues 212-217 (HVIGHH). The helical transmembrane segment at 318–338 (FTDLICYFLIAEFVFGWYLTI) threads the bilayer. Positions 396-400 (QVVHH) match the Histidine box-3 motif.

This sequence belongs to the fatty acid desaturase type 1 family. Fe cation serves as cofactor.

It localises to the membrane. Specific for desaturation of the 5 position in C16 and C18 fatty acids. This chain is Delta(5) fatty acid desaturase A (fadA), found in Dictyostelium discoideum (Social amoeba).